Consider the following 205-residue polypeptide: Ribosome maturation factor RimP (205 aa).

Belongs to the RimP family.

The protein resides in the cytoplasm. Functionally, required for maturation of 30S ribosomal subunits. This Sinorhizobium medicae (strain WSM419) (Ensifer medicae) protein is Ribosome maturation factor RimP.